A 95-amino-acid chain; its full sequence is Large ribosomal subunit protein bL31 (95 aa).

The interval 68 to 95 (AGLNNINKKPEKKKIQGKSEPRKSLNEL) is disordered. The span at 80 to 95 (KKIQGKSEPRKSLNEL) shows a compositional bias: basic and acidic residues.

This sequence belongs to the bacterial ribosomal protein bL31 family. Type A subfamily. As to quaternary structure, part of the 50S ribosomal subunit.

Its function is as follows. Binds the 23S rRNA. The sequence is that of Large ribosomal subunit protein bL31 from Ureaplasma parvum serovar 3 (strain ATCC 700970).